The following is a 98-amino-acid chain: NADH-ubiquinone oxidoreductase chain 4L (98 aa).

3 helical membrane passes run 1 to 21 (MSMV…GLLM), 29 to 49 (SLLC…LTIL), and 61 to 81 (IILL…LVMV).

The protein belongs to the complex I subunit 4L family. In terms of assembly, core subunit of respiratory chain NADH dehydrogenase (Complex I) which is composed of 45 different subunits.

The protein resides in the mitochondrion inner membrane. The enzyme catalyses a ubiquinone + NADH + 5 H(+)(in) = a ubiquinol + NAD(+) + 4 H(+)(out). Core subunit of the mitochondrial membrane respiratory chain NADH dehydrogenase (Complex I) which catalyzes electron transfer from NADH through the respiratory chain, using ubiquinone as an electron acceptor. Part of the enzyme membrane arm which is embedded in the lipid bilayer and involved in proton translocation. The chain is NADH-ubiquinone oxidoreductase chain 4L (MT-ND4L) from Bos mutus grunniens (Wild yak).